Reading from the N-terminus, the 208-residue chain is Adult-specific cuticular protein ACP-20 (208 aa).

Residues methionine 1–alanine 17 form the signal peptide. The stretch at glycine 34–glycine 43 is repeat 1. Residues glycine 34–glycine 180 are 2 X 10 AA repeats. In terms of domain architecture, Chitin-binding type R&amp;R spans proline 64–leucine 135. The stretch at glycine 171 to glycine 180 is repeat 2.

As to expression, epidermal regions synthesizing hard cuticle.

Its function is as follows. Cuticular proteins play a significant role in determining the physical properties of cuticles. This is Adult-specific cuticular protein ACP-20 (ACP20) from Tenebrio molitor (Yellow mealworm beetle).